The sequence spans 115 residues: Small ribosomal subunit protein uS14m (115 aa).

Belongs to the universal ribosomal protein uS14 family. Component of the mitochondrial small ribosomal subunit (mt-SSU). Mature yeast 74S mitochondrial ribosomes consist of a small (37S) and a large (54S) subunit. The 37S small subunit contains a 15S ribosomal RNA (15S mt-rRNA) and 34 different proteins. The 54S large subunit contains a 21S rRNA (21S mt-rRNA) and 46 different proteins.

It localises to the mitochondrion. Functionally, component of the mitochondrial ribosome (mitoribosome), a dedicated translation machinery responsible for the synthesis of mitochondrial genome-encoded proteins, including at least some of the essential transmembrane subunits of the mitochondrial respiratory chain. The mitoribosomes are attached to the mitochondrial inner membrane and translation products are cotranslationally integrated into the membrane. This Saccharomyces cerevisiae (strain ATCC 204508 / S288c) (Baker's yeast) protein is Small ribosomal subunit protein uS14m (MRP2).